Consider the following 230-residue polypeptide: Ribonuclease 3 (230 aa).

An RNase III domain is found at 19 to 134; it reads ELLTIALTHR…LLGAIYLEHG (116 aa). Glu44 is a Mg(2+) binding site. The active site involves Asp48. Residues Asp120 and Glu123 each contribute to the Mg(2+) site. One can recognise a DRBM domain in the interval 161–229; it reads DWKSSLQELT…AASAYKTLDE (69 aa).

This sequence belongs to the ribonuclease III family. As to quaternary structure, homodimer. It depends on Mg(2+) as a cofactor.

It localises to the cytoplasm. The catalysed reaction is Endonucleolytic cleavage to 5'-phosphomonoester.. In terms of biological role, digests double-stranded RNA. Involved in the processing of primary rRNA transcript to yield the immediate precursors to the all rRNAs (23S, 16S and 5S). Processes some mRNAs, and tRNAs when they are encoded in the rRNA operon. Processes pre-crRNA and tracrRNA of type II CRISPR loci if present in the organism. This is Ribonuclease 3 (rnc) from Mycolicibacterium smegmatis (strain ATCC 700084 / mc(2)155) (Mycobacterium smegmatis).